We begin with the raw amino-acid sequence, 323 residues long: ComG operon protein 2 (323 aa).

3 consecutive transmembrane segments (helical) span residues 93–113 (YPLF…SIII), 143–163 (LVII…WLVF), and 296–316 (MIYG…LVPM).

The protein belongs to the GSP F family.

It localises to the cell membrane. Required for transformation and DNA binding. This Bacillus subtilis (strain 168) protein is ComG operon protein 2 (comGB).